The chain runs to 453 residues: uncharacterized protein (453 aa).

4 residues coordinate [4Fe-4S] cluster: Cys-74, Cys-80, Cys-83, and Cys-162. Gln-286, Tyr-315, Glu-336, and Asp-384 together coordinate S-adenosyl-L-methionine. Catalysis depends on Cys-411, which acts as the Nucleophile.

The protein belongs to the class I-like SAM-binding methyltransferase superfamily. RNA M5U methyltransferase family.

This is an uncharacterized protein from Staphylococcus aureus (strain COL).